Here is a 122-residue protein sequence, read N- to C-terminus: Nitrogen fixation nifHD region GlnB-like protein 2 (122 aa).

The protein belongs to the P(II) protein family.

Functionally, could be involved in the regulation of nitrogen fixation. This is Nitrogen fixation nifHD region GlnB-like protein 2 (glnBB) from Methanobacterium ivanovii.